Consider the following 428-residue polypeptide: Tyrosine--tRNA ligase (428 aa).

Tyr-41 contacts L-tyrosine. The 'HIGH' region signature appears at 46-55 (PTADSLHLGH). L-tyrosine-binding residues include Tyr-179 and Gln-183. The 'KMSKS' region signature appears at 239–243 (KFGKT). Lys-242 lines the ATP pocket. In terms of domain architecture, S4 RNA-binding spans 361–418 (ADLMQALVDSELQPSRGQARKTIASNAVTINGEKQSDPEYFFQDSDILFGRYTLLRRG).

Belongs to the class-I aminoacyl-tRNA synthetase family. TyrS type 1 subfamily. In terms of assembly, homodimer.

Its subcellular location is the cytoplasm. The catalysed reaction is tRNA(Tyr) + L-tyrosine + ATP = L-tyrosyl-tRNA(Tyr) + AMP + diphosphate + H(+). In terms of biological role, catalyzes the attachment of tyrosine to tRNA(Tyr) in a two-step reaction: tyrosine is first activated by ATP to form Tyr-AMP and then transferred to the acceptor end of tRNA(Tyr). The sequence is that of Tyrosine--tRNA ligase from Citrobacter koseri (strain ATCC BAA-895 / CDC 4225-83 / SGSC4696).